Consider the following 281-residue polypeptide: ATP phosphoribosyltransferase (281 aa).

It belongs to the ATP phosphoribosyltransferase family. Long subfamily. The cofactor is Mg(2+).

It localises to the cytoplasm. It carries out the reaction 1-(5-phospho-beta-D-ribosyl)-ATP + diphosphate = 5-phospho-alpha-D-ribose 1-diphosphate + ATP. The protein operates within amino-acid biosynthesis; L-histidine biosynthesis; L-histidine from 5-phospho-alpha-D-ribose 1-diphosphate: step 1/9. With respect to regulation, feedback inhibited by histidine. In terms of biological role, catalyzes the condensation of ATP and 5-phosphoribose 1-diphosphate to form N'-(5'-phosphoribosyl)-ATP (PR-ATP). Has a crucial role in the pathway because the rate of histidine biosynthesis seems to be controlled primarily by regulation of HisG enzymatic activity. In Corynebacterium glutamicum (strain R), this protein is ATP phosphoribosyltransferase.